An 88-amino-acid polypeptide reads, in one-letter code: Small ribosomal subunit protein bS16c (88 aa).

It belongs to the bacterial ribosomal protein bS16 family.

The protein resides in the plastid. It localises to the chloroplast. The protein is Small ribosomal subunit protein bS16c of Citrus sinensis (Sweet orange).